A 391-amino-acid chain; its full sequence is Heme A synthase (391 aa).

8 helical membrane passes run 37–57 (IRLW…VGGL), 121–141 (RQLG…FLVA), 152–172 (LLAL…MVAS), 186–206 (LAVH…QALL), 229–249 (TTVL…VAGI), 298–318 (FLHR…WIFG), 332–352 (LLAL…LSAA), and 354–374 (WQVA…ILHA). His300 is a heme binding site. His360 contacts heme.

It belongs to the COX15/CtaA family. Type 2 subfamily. In terms of assembly, interacts with CtaB. Heme b serves as cofactor.

Its subcellular location is the cell membrane. The catalysed reaction is Fe(II)-heme o + 2 A + H2O = Fe(II)-heme a + 2 AH2. Its pathway is porphyrin-containing compound metabolism; heme A biosynthesis; heme A from heme O: step 1/1. Catalyzes the conversion of heme O to heme A by two successive hydroxylations of the methyl group at C8. The first hydroxylation forms heme I, the second hydroxylation results in an unstable dihydroxymethyl group, which spontaneously dehydrates, resulting in the formyl group of heme A. The sequence is that of Heme A synthase from Cereibacter sphaeroides (strain ATCC 17025 / ATH 2.4.3) (Rhodobacter sphaeroides).